A 257-amino-acid polypeptide reads, in one-letter code: K88 minor fimbrial subunit FaeJ (257 aa).

An N-terminal signal peptide occupies residues 1–26 (MLNIIHRLKSGMFPALFFLTSASVLA).

Its subcellular location is the fimbrium. Functionally, K88 minor fimbrial subunit, plays an essential role in the biogenesis of the K88 fimbriae. Fimbriae (also called pili), are polar filaments radiating from the surface of the bacterium to a length of 0.5-1.5 micrometers and numbering 100-300 per cell. They enable bacteria to colonize the epithelium of specific host organs. The chain is K88 minor fimbrial subunit FaeJ (faeJ) from Escherichia coli.